We begin with the raw amino-acid sequence, 298 residues long: Lipoyl synthase (298 aa).

Positions 40, 45, 51, 67, 71, 74, and 280 each coordinate [4Fe-4S] cluster. The region spanning 53 to 269 (AVRRTATFMI…KEIAMQKGFS (217 aa)) is the Radical SAM core domain.

It belongs to the radical SAM superfamily. Lipoyl synthase family. It depends on [4Fe-4S] cluster as a cofactor.

The protein localises to the cytoplasm. It catalyses the reaction [[Fe-S] cluster scaffold protein carrying a second [4Fe-4S](2+) cluster] + N(6)-octanoyl-L-lysyl-[protein] + 2 oxidized [2Fe-2S]-[ferredoxin] + 2 S-adenosyl-L-methionine + 4 H(+) = [[Fe-S] cluster scaffold protein] + N(6)-[(R)-dihydrolipoyl]-L-lysyl-[protein] + 4 Fe(3+) + 2 hydrogen sulfide + 2 5'-deoxyadenosine + 2 L-methionine + 2 reduced [2Fe-2S]-[ferredoxin]. It participates in protein modification; protein lipoylation via endogenous pathway; protein N(6)-(lipoyl)lysine from octanoyl-[acyl-carrier-protein]. Catalyzes the radical-mediated insertion of two sulfur atoms into the C-6 and C-8 positions of the octanoyl moiety bound to the lipoyl domains of lipoate-dependent enzymes, thereby converting the octanoylated domains into lipoylated derivatives. This Bacillus velezensis (strain DSM 23117 / BGSC 10A6 / LMG 26770 / FZB42) (Bacillus amyloliquefaciens subsp. plantarum) protein is Lipoyl synthase.